The primary structure comprises 843 residues: Probable cleavage and polyadenylation specificity factor subunit 2 (843 aa).

Over residues 414–425 the composition is skewed to basic and acidic residues; the sequence is AEETRLRMERAR. 2 disordered regions span residues 414-443 and 691-753; these read AEET…DIAA and DKNR…TKGK. Residues 432–441 are compositionally biased toward acidic residues; sequence ESDDSDDDDI. The segment covering 732–746 has biased composition (basic and acidic residues); that stretch reads SGKEVENGHTNDSRT.

It belongs to the metallo-beta-lactamase superfamily. RNA-metabolizing metallo-beta-lactamase-like family. CPSF2/YSH1 subfamily. As to quaternary structure, CPSF is a heterotetramer composed of four distinct subunits 160, 100, 70 and 30 kDa.

It is found in the nucleus. In terms of biological role, CPSF plays a key role in pre-mRNA 3'-end formation, recognizing the AAUAAA signal sequence and interacting with poly(A)polymerase and other factors to bring about cleavage and poly(A) addition. The chain is Probable cleavage and polyadenylation specificity factor subunit 2 (cpsf-2) from Caenorhabditis elegans.